A 169-amino-acid polypeptide reads, in one-letter code: Lutropin/choriogonadotropin subunit beta (169 aa).

Positions M1–A20 are cleaved as a signal peptide. 6 disulfide bridges follow: C29–C77, C43–C92, C46–C130, C54–C108, C58–C110, and C113–C120. The N-linked (GlcNAc...) asparagine glycan is linked to N33. The interval A131–S169 is disordered. A compositionally biased stretch (low complexity) spans P145–R158.

The protein belongs to the glycoprotein hormones subunit beta family. In terms of assembly, heterodimer of a common alpha chain and a unique beta chain which confers biological specificity to thyrotropin, lutropin, follitropin and gonadotropin.

The protein localises to the secreted. In terms of biological role, promotes spermatogenesis and ovulation by stimulating the testes and ovaries to synthesize steroids. The sequence is that of Lutropin/choriogonadotropin subunit beta (LHB) from Equus asinus (Donkey).